The following is a 386-amino-acid chain: Protein phosphatase methylesterase 1 (386 aa).

Positions 1 to 38 are disordered; that stretch reads MSALEKSMHLGRLPSRPPLPGSGGSQSGAKMRMGPGRK. Ser15 is subject to Phosphoserine. Residue Arg16 is modified to Asymmetric dimethylarginine; alternate. Arg16 carries the post-translational modification Omega-N-methylarginine; alternate. Active-site residues include Ser156 and Asp181. Acidic residues predominate over residues 255–265; the sequence is IEEEEEDEEGS. The interval 255-280 is disordered; sequence IEEEEEDEEGSESVNKRKKEDDMETK. Residues 268-280 are compositionally biased toward basic and acidic residues; it reads VNKRKKEDDMETK. Residue His349 is part of the active site.

This sequence belongs to the AB hydrolase superfamily. Binds PPP2CA and PPP2CB. In terms of processing, phosphorylated by SIK1 following increases in intracellular sodium, leading to dissociation from the protein phosphatase 2A (PP2A) complex and subsequent dephosphorylation of sodium/potassium-transporting ATPase ATP1A1. As to expression, ubiquitous. Highly expressed in testis and brain.

It catalyses the reaction [phosphatase 2A protein]-C-terminal L-leucine methyl ester + H2O = [phosphatase 2A protein]-C-terminal L-leucine + methanol + H(+). Demethylates proteins that have been reversibly carboxymethylated. Demethylates PPP2CB (in vitro) and PPP2CA. Binding to PPP2CA displaces the manganese ion and inactivates the enzyme. The sequence is that of Protein phosphatase methylesterase 1 (Ppme1) from Mus musculus (Mouse).